The primary structure comprises 146 residues: Large ribosomal subunit protein uL15 (146 aa).

The span at 1-18 (MKLHELKPSEGSRKERNR) shows a compositional bias: basic and acidic residues. The segment at 1-50 (MKLHELKPSEGSRKERNRVGRGTGSGNGKTSGRGHKGQKARSGGGVRLGF) is disordered. Over residues 21–31 (RGTGSGNGKTS) the composition is skewed to gly residues.

It belongs to the universal ribosomal protein uL15 family. Part of the 50S ribosomal subunit.

Its function is as follows. Binds to the 23S rRNA. This Listeria innocua serovar 6a (strain ATCC BAA-680 / CLIP 11262) protein is Large ribosomal subunit protein uL15.